The sequence spans 35 residues: 5'-methylthioadenosine/S-adenosylhomocysteine nucleosidase (35 aa).

Residue glutamate 12 is the Proton acceptor of the active site.

It belongs to the PNP/UDP phosphorylase family. MtnN subfamily. Homodimer.

It carries out the reaction S-adenosyl-L-homocysteine + H2O = S-(5-deoxy-D-ribos-5-yl)-L-homocysteine + adenine. The enzyme catalyses S-methyl-5'-thioadenosine + H2O = 5-(methylsulfanyl)-D-ribose + adenine. It catalyses the reaction 5'-deoxyadenosine + H2O = 5-deoxy-D-ribose + adenine. It functions in the pathway amino-acid biosynthesis; L-methionine biosynthesis via salvage pathway; S-methyl-5-thio-alpha-D-ribose 1-phosphate from S-methyl-5'-thioadenosine (hydrolase route): step 1/2. In terms of biological role, catalyzes the irreversible cleavage of the glycosidic bond in both 5'-methylthioadenosine (MTA) and S-adenosylhomocysteine (SAH/AdoHcy) to adenine and the corresponding thioribose, 5'-methylthioribose and S-ribosylhomocysteine, respectively. Also cleaves 5'-deoxyadenosine, a toxic by-product of radical S-adenosylmethionine (SAM) enzymes, into 5-deoxyribose and adenine. Thus, is required for in vivo function of the radical SAM enzymes biotin synthase and lipoic acid synthase, that are inhibited by 5'-deoxyadenosine accumulation. The polypeptide is 5'-methylthioadenosine/S-adenosylhomocysteine nucleosidase (mtnN) (Klebsiella pneumoniae).